The sequence spans 261 residues: MSESLHLTRNGSILEITLDRPKANAIDAKTSFEMGEVFLNFRDDPQLRVAIITGAGEKFFSAGWDLKAAAEGEAPDADFGPGGFAGLTEIFNLDKPVIAAVNGYAFGGGFELALAADFIVCADNASFALPEAKLGIVPDSGGVLRLPKILPPAIVNEMVMTGRRMGAEEALRWGIVNRVVSQAELMDNARELAQQLVNSAPLAIAALKEIYRTTSEMPVEESYSYIRSGVLKHYPSVLHSEDAIEGPLAFAEKRDPVWKGR.

The Nucleophile role is filled by glutamate 111. The active-site Proton acceptor is the glutamate 131.

It belongs to the enoyl-CoA hydratase/isomerase family.

It carries out the reaction (R)-carnitinyl-CoA = crotonobetainyl-CoA + H2O. The protein operates within amine and polyamine metabolism; carnitine metabolism. Its function is as follows. Catalyzes the reversible dehydration of L-carnitinyl-CoA to crotonobetainyl-CoA. The sequence is that of Carnitinyl-CoA dehydratase from Escherichia coli O157:H7.